The sequence spans 500 residues: ADP,ATP carrier protein 5 (500 aa).

The next 11 helical transmembrane spans lie at 21–41 (IYNY…CILF), 62–82 (IAGF…VIIY), 94–114 (IFYY…FVIY), 149–169 (YIVY…LLFW), 184–204 (FYTL…FLMM), 224–244 (ITLV…CCLL), 287–307 (LWLL…VEAV), 328–348 (LYIL…NNVM), 357–377 (AVIS…LIVF), 381–401 (ILSL…VSIG), and 469–489 (SISP…IYAV).

This sequence belongs to the ADP/ATP translocase tlc family.

The protein localises to the cell membrane. Its function is as follows. Provides the rickettsial cell with host ATP in exchange for rickettsial ADP. This is an obligate exchange system. This energy acquiring activity is an important component of rickettsial parasitism. In Rickettsia bellii (strain RML369-C), this protein is ADP,ATP carrier protein 5 (tlcE).